The chain runs to 422 residues: Serine protease HTRA2, mitochondrial (422 aa).

Residues 1–17 (MALRGSHRLEVIFKRCI) constitute a mitochondrion transit peptide. The propeptide occupies 18 to 74 (ASPVLHSQAGNRRSSQLAIKGVDPNSNGNSGQYQQNGEHKEKGWRRLVRFFVPFSLG). The disordered stretch occupies residues 28-55 (NRRSSQLAIKGVDPNSNGNSGQYQQNGE). Low complexity predominate over residues 42-53 (NSNGNSGQYQQN). A helical membrane pass occupies residues 64-82 (LVRFFVPFSLGAAVSAAII). 2 consecutive short sequence motifs (IAP-binding) follow at residues 75-78 (AAVS) and 94-97 (SKMT). A serine protease region spans residues 139–302 (SNGSGFIIEQ…IPIDYVKVFL (164 aa)). Residues His157, Asp189, and Ser266 each act as charge relay system in the active site. One can recognise a PDZ domain in the interval 325–410 (MGITMLTLTP…TLDIVILRGV (86 aa)).

Belongs to the peptidase S1C family. Interacts with th/DIAP1 (via BIR 2 domain).

Its subcellular location is the mitochondrion intermembrane space. The protein resides in the mitochondrion membrane. It carries out the reaction Cleavage of non-polar aliphatic amino-acids at the P1 position, with a preference for Val, Ile and Met. At the P2 and P3 positions, Arg is selected most strongly with a secondary preference for other hydrophilic residues.. In terms of biological role, serine protease that shows proteolytic activity against a non-specific substrate beta-casein. Promotes or induces cell death either by direct binding to and inhibition of BIRC proteins (also called inhibitor of apoptosis proteins, IAPs), leading to an increase in caspase activity, or by a BIRC inhibition-independent, caspase-independent and serine protease activity-dependent mechanism. Can antagonize antiapoptotic activity of th/Diap1 by directly inducing the degradation of th/Diap1. The polypeptide is Serine protease HTRA2, mitochondrial (Drosophila sechellia (Fruit fly)).